We begin with the raw amino-acid sequence, 165 residues long: Large ribosomal subunit protein mL49 (165 aa).

Residues 42 to 75 (TTATTTTPLQQQQQQQPTTQPTTPIQTQTGAAPT) show a composition bias toward low complexity. Residues 42–81 (TTATTTTPLQQQQQQQPTTQPTTPIQTQTGAAPTESTKPV) are disordered.

This sequence belongs to the mitochondrion-specific ribosomal protein mL49 family. As to quaternary structure, component of the mitochondrial large ribosomal subunit (mt-LSU). Mature N.crassa 74S mitochondrial ribosomes consist of a small (37S) and a large (54S) subunit. The 37S small subunit contains a 16S ribosomal RNA (16S mt-rRNA) and 32 different proteins. The 54S large subunit contains a 23S rRNA (23S mt-rRNA) and 42 different proteins.

The protein localises to the mitochondrion. In terms of biological role, component of the mitochondrial ribosome (mitoribosome), a dedicated translation machinery responsible for the synthesis of mitochondrial genome-encoded proteins, including at least some of the essential transmembrane subunits of the mitochondrial respiratory chain. The mitoribosomes are attached to the mitochondrial inner membrane and translation products are cotranslationally integrated into the membrane. This Neurospora crassa (strain ATCC 24698 / 74-OR23-1A / CBS 708.71 / DSM 1257 / FGSC 987) protein is Large ribosomal subunit protein mL49 (img2).